Reading from the N-terminus, the 752-residue chain is Photosystem I P700 chlorophyll a apoprotein A1 (752 aa).

Transmembrane regions (helical) follow at residues 73–96 (IFSA…FHGA), 159–182 (LYAT…FHYH), 198–222 (MNHH…HISI), 294–312 (TAHH…GHMY), 349–372 (WHAQ…HHMY), 388–414 (LSLF…IFMV), 436–458 (AIIS…LYIH), and 533–551 (FMVH…LILV). Residues Cys-575 and Cys-584 each coordinate [4Fe-4S] cluster. 2 consecutive transmembrane segments (helical) span residues 591-612 (HVFL…HFSW) and 666-688 (LSAY…MFLF). His-677 serves as a coordination point for chlorophyll a'. The chlorophyll a site is built by Met-685 and Tyr-693. Trp-694 lines the phylloquinone pocket. A helical transmembrane segment spans residues 726–746 (AVGVAHYLLGGIGTTWAFFLA).

This sequence belongs to the PsaA/PsaB family. As to quaternary structure, the PsaA/B heterodimer binds the P700 chlorophyll special pair and subsequent electron acceptors. PSI consists of a core antenna complex that captures photons, and an electron transfer chain that converts photonic excitation into a charge separation. The eukaryotic PSI reaction center is composed of at least 11 subunits. It depends on P700 is a chlorophyll a/chlorophyll a' dimer, A0 is one or more chlorophyll a, A1 is one or both phylloquinones and FX is a shared 4Fe-4S iron-sulfur center. as a cofactor.

It localises to the plastid. The protein resides in the chloroplast thylakoid membrane. It carries out the reaction reduced [plastocyanin] + hnu + oxidized [2Fe-2S]-[ferredoxin] = oxidized [plastocyanin] + reduced [2Fe-2S]-[ferredoxin]. Its function is as follows. PsaA and PsaB bind P700, the primary electron donor of photosystem I (PSI), as well as the electron acceptors A0, A1 and FX. PSI is a plastocyanin/cytochrome c6-ferredoxin oxidoreductase, converting photonic excitation into a charge separation, which transfers an electron from the donor P700 chlorophyll pair to the spectroscopically characterized acceptors A0, A1, FX, FA and FB in turn. Oxidized P700 is reduced on the lumenal side of the thylakoid membrane by plastocyanin or cytochrome c6. The chain is Photosystem I P700 chlorophyll a apoprotein A1 from Gracilaria tenuistipitata var. liui (Red alga).